Here is a 373-residue protein sequence, read N- to C-terminus: Lipoyl synthase (373 aa).

A disordered region spans residues 12-36 (HVVSNDHPSSSPLQPGVKQSGEDKI). The [4Fe-4S] cluster site is built by cysteine 81, cysteine 86, cysteine 92, cysteine 107, cysteine 111, cysteine 114, and serine 323. Residues 93–312 (FSHGTATFMI…EEYGMALGFS (220 aa)) form the Radical SAM core domain. The interval 346–373 (PAVSSTEHRERHTIASKSASKTESIRHR) is disordered.

The protein belongs to the radical SAM superfamily. Lipoyl synthase family. [4Fe-4S] cluster is required as a cofactor.

It localises to the cytoplasm. It catalyses the reaction [[Fe-S] cluster scaffold protein carrying a second [4Fe-4S](2+) cluster] + N(6)-octanoyl-L-lysyl-[protein] + 2 oxidized [2Fe-2S]-[ferredoxin] + 2 S-adenosyl-L-methionine + 4 H(+) = [[Fe-S] cluster scaffold protein] + N(6)-[(R)-dihydrolipoyl]-L-lysyl-[protein] + 4 Fe(3+) + 2 hydrogen sulfide + 2 5'-deoxyadenosine + 2 L-methionine + 2 reduced [2Fe-2S]-[ferredoxin]. It participates in protein modification; protein lipoylation via endogenous pathway; protein N(6)-(lipoyl)lysine from octanoyl-[acyl-carrier-protein]: step 2/2. In terms of biological role, catalyzes the radical-mediated insertion of two sulfur atoms into the C-6 and C-8 positions of the octanoyl moiety bound to the lipoyl domains of lipoate-dependent enzymes, thereby converting the octanoylated domains into lipoylated derivatives. In Xylella fastidiosa (strain 9a5c), this protein is Lipoyl synthase.